A 398-amino-acid polypeptide reads, in one-letter code: Immunoglobulin heavy constant gamma 2A (398 aa).

Ig-like domains lie at 5 to 97 (PSVY…KKIE), 120 to 219 (PSVF…RTIS), and 228 to 324 (PQVY…KSFS). 3 disulfide bridges follow: cysteine 26/cysteine 81, cysteine 143/cysteine 203, and cysteine 249/cysteine 307. N-linked (GlcNAc...) asparagine glycosylation occurs at asparagine 179. Residues 345–362 (GLWTTITIFISLFLLSVC) traverse the membrane as a helical segment. The Cytoplasmic segment spans residues 363–398 (YSASVTLFKVKWIFSSVVELKQTISPDYRNMIGQGA).

The protein localises to the cell membrane. The chain is Immunoglobulin heavy constant gamma 2A from Mus musculus (Mouse).